Here is a 1218-residue protein sequence, read N- to C-terminus: Coatomer subunit alpha-2 (1218 aa).

WD repeat units follow at residues 7–48, 49–88, 91–132, 133–172, 202–241, 246–285, 288–326, and 363–404; these read TKSN…DRFD, EHDG…CLFT, GHLD…AVLT, GHNH…KKSV, GHDR…AWEV, GHMN…GIQT, REHD…PAFS, and SLNQ…AGRA. A disordered region spans residues 855-876; sequence MANGGDGFDAEEGEANEEDGEE. Acidic residues predominate over residues 862-876; that stretch reads FDAEEGEANEEDGEE.

Oligomeric complex that consists of at least the alpha, beta, beta', gamma, delta, epsilon and zeta subunits.

It is found in the cytoplasm. Its subcellular location is the golgi apparatus membrane. The protein resides in the cytoplasmic vesicle. The protein localises to the COPI-coated vesicle membrane. Functionally, the coatomer is a cytosolic protein complex that binds to dilysine motifs and reversibly associates with Golgi non-clathrin-coated vesicles, which further mediate biosynthetic protein transport from the ER, via the Golgi up to the trans Golgi network. Coatomer complex is required for budding from Golgi membranes, and is essential for the retrograde Golgi-to-ER transport of dilysine-tagged proteins. In Oryza sativa subsp. japonica (Rice), this protein is Coatomer subunit alpha-2.